The sequence spans 531 residues: Phosphoinositide phospholipase C 9 (531 aa).

One can recognise a PI-PLC X-box domain in the interval Arg-107–Arg-253. The PI-PLC Y-box domain maps to Glu-265–Leu-385. Ser-276 carries the phosphoserine modification. The C2 domain occupies Asn-386–Asp-513.

It depends on Ca(2+) as a cofactor. In terms of tissue distribution, expressed in leaves, roots, flowers and siliques.

Its subcellular location is the cell membrane. It carries out the reaction a 1,2-diacyl-sn-glycero-3-phospho-(1D-myo-inositol-4,5-bisphosphate) + H2O = 1D-myo-inositol 1,4,5-trisphosphate + a 1,2-diacyl-sn-glycerol + H(+). In terms of biological role, the production of the second messenger molecules diacylglycerol (DAG) and inositol 1,4,5-trisphosphate (IP3) is mediated by activated phosphatidylinositol-specific phospholipase C enzymes. In Arabidopsis thaliana (Mouse-ear cress), this protein is Phosphoinositide phospholipase C 9 (PLC9).